The following is a 174-amino-acid chain: 3-hydroxyanthranilate 3,4-dioxygenase (174 aa).

Residue Arg-47 coordinates O2. Residues His-51, Glu-57, and His-95 each coordinate Fe cation. Glu-57 contacts substrate. Residues Arg-99 and Glu-110 each coordinate substrate. Residues Cys-125, Cys-128, Cys-162, and Cys-165 each coordinate Fe cation.

The protein belongs to the 3-HAO family. Homodimer. Fe(2+) is required as a cofactor.

It carries out the reaction 3-hydroxyanthranilate + O2 = (2Z,4Z)-2-amino-3-carboxymuconate 6-semialdehyde. The protein operates within cofactor biosynthesis; NAD(+) biosynthesis; quinolinate from L-kynurenine: step 3/3. Functionally, catalyzes the oxidative ring opening of 3-hydroxyanthranilate to 2-amino-3-carboxymuconate semialdehyde, which spontaneously cyclizes to quinolinate. This is 3-hydroxyanthranilate 3,4-dioxygenase from Burkholderia lata (strain ATCC 17760 / DSM 23089 / LMG 22485 / NCIMB 9086 / R18194 / 383).